The following is a 223-amino-acid chain: Endonuclease V (223 aa).

2 residues coordinate Mg(2+): Asp35 and Asp103.

It belongs to the endonuclease V family. It depends on Mg(2+) as a cofactor.

It is found in the cytoplasm. The catalysed reaction is Endonucleolytic cleavage at apurinic or apyrimidinic sites to products with a 5'-phosphate.. Its function is as follows. DNA repair enzyme involved in the repair of deaminated bases. Selectively cleaves double-stranded DNA at the second phosphodiester bond 3' to a deoxyinosine leaving behind the intact lesion on the nicked DNA. The polypeptide is Endonuclease V (Klebsiella pneumoniae subsp. pneumoniae (strain ATCC 700721 / MGH 78578)).